Here is a 264-residue protein sequence, read N- to C-terminus: MAKITTASLLNMKQQGKKISTITAYDASFAKLFDQAGIHAILIGDSLGMVLQGQDSTLPVTIEDMAYHTRCVKRGVEETLIIADMPFMSYANEEQALANAALLMQAGASMVKIEGGAWLNGTISALVERGVPVCAHLGLTPQSVNIFGGFKVQGRDDDKAQQMIADAKALEAAGAQLLVLECIPAILGEAITQALTIPTIGIGAGKDTDGQILVMHDALGIACNYMPKFSRNFLKDTGDIKKAVELYISEVSEGNFPGDEHIFK.

The Mg(2+) site is built by Asp45 and Asp84. Residues 45-46 (DS), Asp84, and Lys112 contribute to the 3-methyl-2-oxobutanoate site. Residue Glu114 participates in Mg(2+) binding. The active-site Proton acceptor is the Glu181.

This sequence belongs to the PanB family. Homodecamer; pentamer of dimers. Requires Mg(2+) as cofactor.

The protein localises to the cytoplasm. The enzyme catalyses 3-methyl-2-oxobutanoate + (6R)-5,10-methylene-5,6,7,8-tetrahydrofolate + H2O = 2-dehydropantoate + (6S)-5,6,7,8-tetrahydrofolate. It functions in the pathway cofactor biosynthesis; (R)-pantothenate biosynthesis; (R)-pantoate from 3-methyl-2-oxobutanoate: step 1/2. In terms of biological role, catalyzes the reversible reaction in which hydroxymethyl group from 5,10-methylenetetrahydrofolate is transferred onto alpha-ketoisovalerate to form ketopantoate. This chain is 3-methyl-2-oxobutanoate hydroxymethyltransferase, found in Colwellia psychrerythraea (strain 34H / ATCC BAA-681) (Vibrio psychroerythus).